The primary structure comprises 197 residues: Cell division protein SepF (197 aa).

Disordered regions lie at residues Met-38 to Thr-72 and Leu-164 to Gln-197. Residues Thr-58–Thr-72 show a composition bias toward polar residues. Positions Pro-170–Ala-185 are enriched in low complexity.

This sequence belongs to the SepF family. Homodimer. Interacts with FtsZ.

It is found in the cytoplasm. Its function is as follows. Cell division protein that is part of the divisome complex and is recruited early to the Z-ring. Probably stimulates Z-ring formation, perhaps through the cross-linking of FtsZ protofilaments. Its function overlaps with FtsA. This chain is Cell division protein SepF, found in Picosynechococcus sp. (strain ATCC 27264 / PCC 7002 / PR-6) (Agmenellum quadruplicatum).